A 350-amino-acid polypeptide reads, in one-letter code: Serine-threonine kinase receptor-associated protein (350 aa).

7 WD repeats span residues 12-56 (GHTR…GTFL), 57-96 (GHKG…ELMT), 98-137 (AHKH…AEPK), 141-179 (GHTS…EVKS), 180-212 (LNFN…HSAV), 221-262 (EAPA…ESYK), and 263-302 (GHFG…TYGL). 3 positions are modified to phosphoserine: Ser312, Ser335, and Ser338. The disordered stretch occupies residues 326–350 (AEEELEEIASENSDSIYSSTPEVKA). Positions 337 to 350 (NSDSIYSSTPEVKA) are enriched in polar residues. A Phosphotyrosine modification is found at Tyr342.

The protein belongs to the WD repeat STRAP family. Part of the core SMN complex that contains SMN1, GEMIN2/SIP1, DDX20/GEMIN3, GEMIN4, GEMIN5, GEMIN6, GEMIN7, GEMIN8 and STRAP/UNRIP. Part of the SMN-Sm complex that contains SMN1, GEMIN2/SIP1, DDX20/GEMIN3, GEMIN4, GEMIN5, GEMIN6, GEMIN7, GEMIN8, STRAP/UNRIP and the Sm proteins SNRPB, SNRPD1, SNRPD2, SNRPD3, SNRPE, SNRPF and SNRPG. Interacts directly with GEMIN6 and GEMIN7. Associates with the SMN complex in the cytoplasm but not in the nucleus. Also interacts with CSDE1/UNR and MAWBP. Interacts with PDPK1. Interacts with TRIM48.

Its subcellular location is the cytoplasm. It is found in the nucleus. Its function is as follows. The SMN complex catalyzes the assembly of small nuclear ribonucleoproteins (snRNPs), the building blocks of the spliceosome, and thereby plays an important role in the splicing of cellular pre-mRNAs. Most spliceosomal snRNPs contain a common set of Sm proteins SNRPB, SNRPD1, SNRPD2, SNRPD3, SNRPE, SNRPF and SNRPG that assemble in a heptameric protein ring on the Sm site of the small nuclear RNA to form the core snRNP (Sm core). In the cytosol, the Sm proteins SNRPD1, SNRPD2, SNRPE, SNRPF and SNRPG are trapped in an inactive 6S pICln-Sm complex by the chaperone CLNS1A that controls the assembly of the core snRNP. To assemble core snRNPs, the SMN complex accepts the trapped 5Sm proteins from CLNS1A forming an intermediate. Binding of snRNA inside 5Sm triggers eviction of the SMN complex, thereby allowing binding of SNRPD3 and SNRPB to complete assembly of the core snRNP. STRAP plays a role in the cellular distribution of the SMN complex. Negatively regulates TGF-beta signaling but positively regulates the PDPK1 kinase activity by enhancing its autophosphorylation and by significantly reducing the association of PDPK1 with 14-3-3 protein. This Rattus norvegicus (Rat) protein is Serine-threonine kinase receptor-associated protein (Strap).